We begin with the raw amino-acid sequence, 122 residues long: MIQMQTNLDVADNSGARRVMCIKVLGGSKRKYASIGDIIVVSIKEAIPRGRVKKGDVMKAVVVRTAKDIRRADGSVIRFDTNAAVLIDNKKEPIGTRIFGPVPRELRAKNHMKIISLAPEVL.

The protein belongs to the universal ribosomal protein uL14 family. Part of the 50S ribosomal subunit. Forms a cluster with proteins L3 and L19. In the 70S ribosome, L14 and L19 interact and together make contacts with the 16S rRNA in bridges B5 and B8.

Its function is as follows. Binds to 23S rRNA. Forms part of two intersubunit bridges in the 70S ribosome. The chain is Large ribosomal subunit protein uL14 from Rhizobium meliloti (strain 1021) (Ensifer meliloti).